A 518-amino-acid polypeptide reads, in one-letter code: Serine hydroxymethyltransferase, mitochondrial (518 aa).

A mitochondrion-targeting transit peptide spans 1-31 (MAMAMALRKLSSSVNKSSRPLFSASSLYYKS). Lys287 is subject to N6-(pyridoxal phosphate)lysine.

It belongs to the SHMT family. Homotetramer. Pyridoxal 5'-phosphate serves as cofactor.

It is found in the mitochondrion. The enzyme catalyses (6R)-5,10-methylene-5,6,7,8-tetrahydrofolate + glycine + H2O = (6S)-5,6,7,8-tetrahydrofolate + L-serine. It functions in the pathway one-carbon metabolism; tetrahydrofolate interconversion. Its function is as follows. Catalyzes the interconversion of serine and glycine. This chain is Serine hydroxymethyltransferase, mitochondrial, found in Pisum sativum (Garden pea).